Here is a 66-residue protein sequence, read N- to C-terminus: Panusin (66 aa).

Positions 1-22 are cleaved as a signal peptide; it reads MKTKAVLMLMLLVLVAATLVQG. The propeptide occupies 23–26; sequence EPEP. Intrachain disulfides connect C32-C54, C39-C61, and C44-C60. Residue Y65 is modified to Tyrosine amide.

As to quaternary structure, forms dimers and higher-order oligomers. Contains 3 disulfide bonds.

Antimicrobial peptide. Has antibacterial activity against Gram-positive bacteria S.aureus ATCC 29737 and B.subtilis ATCC 6633 as well as against Gram-negative bacteria E.coli ATCC 10536 and K.pneumoniae ATCC 10031. This Panulirus argus (Caribbean spiny lobster) protein is Panusin.